A 202-amino-acid chain; its full sequence is Ribosome maturation factor RimP (202 aa).

The protein belongs to the RimP family.

The protein localises to the cytoplasm. Functionally, required for maturation of 30S ribosomal subunits. The protein is Ribosome maturation factor RimP of Polaromonas naphthalenivorans (strain CJ2).